A 150-amino-acid polypeptide reads, in one-letter code: Single-stranded DNA-binding protein rim1, mitochondrial (150 aa).

The transit peptide at 1–22 directs the protein to the mitochondrion; the sequence is MLFLKSSRAFSKRLFSSSTVRY. One can recognise an SSB domain in the interval 25–125; sequence IQRLTLTGNL…HVSADVLFYP (101 aa). The segment at 127-150 is disordered; sequence NKNGDESGEETHPELDADPMINSF. Basic and acidic residues predominate over residues 128-141; sequence KNGDESGEETHPEL.

The protein localises to the mitochondrion. In terms of biological role, this protein binds preferentially and cooperatively to ss-DNA. Involved in mitochondrial DNA replication. The chain is Single-stranded DNA-binding protein rim1, mitochondrial (rim1) from Schizosaccharomyces pombe (strain 972 / ATCC 24843) (Fission yeast).